A 507-amino-acid polypeptide reads, in one-letter code: Carnosic acid synthase (507 aa).

Residues 6–23 (VFSLAFLAAWFIVVFPRW) traverse the membrane as a helical segment. C450 lines the heme pocket.

It belongs to the cytochrome P450 family. The cofactor is heme. Expressed in glandular trichomes of young leaves.

The protein resides in the membrane. It catalyses the reaction 11-hydroxyferruginol + 3 reduced [NADPH--hemoprotein reductase] + 3 O2 = carnosate + 3 oxidized [NADPH--hemoprotein reductase] + 4 H2O + 4 H(+). It carries out the reaction miltiradiene + 2 reduced [NADPH--hemoprotein reductase] + 2 O2 = miltiradien-20-al + 2 oxidized [NADPH--hemoprotein reductase] + 3 H2O + 2 H(+). The catalysed reaction is ferruginol + 3 reduced [NADPH--hemoprotein reductase] + 3 O2 = pisiferate + 3 oxidized [NADPH--hemoprotein reductase] + 4 H2O + 4 H(+). Its pathway is secondary metabolite biosynthesis; terpenoid biosynthesis. Monooxygenase involved in the biosynthesis of carnosate, a potent antioxidant labdane-related diterpene natural product. Catalyzes the oxidation of 11-hydroxyferruginol to produce carnosate. Mediates the conversion of miltiradien into miltiradien-20-al. Also involved in the production of pisiferic acid and derivative products from ferruginol. This chain is Carnosic acid synthase, found in Rosmarinus officinalis (Rosemary).